The following is a 254-amino-acid chain: Adenosylcobinamide-GDP ribazoletransferase (254 aa).

Helical transmembrane passes span 27-47 (SSLY…VLLA), 50-70 (GMGV…GLIL), 104-124 (VGSF…ICLL), 131-151 (AYGM…LLAA), 170-190 (AGWP…FVLL), 194-214 (LAPS…VGWL), and 233-253 (LVEA…FWAI).

Belongs to the CobS family. It depends on Mg(2+) as a cofactor.

The protein resides in the cell inner membrane. The enzyme catalyses alpha-ribazole + adenosylcob(III)inamide-GDP = adenosylcob(III)alamin + GMP + H(+). It carries out the reaction alpha-ribazole 5'-phosphate + adenosylcob(III)inamide-GDP = adenosylcob(III)alamin 5'-phosphate + GMP + H(+). It functions in the pathway cofactor biosynthesis; adenosylcobalamin biosynthesis; adenosylcobalamin from cob(II)yrinate a,c-diamide: step 7/7. Functionally, joins adenosylcobinamide-GDP and alpha-ribazole to generate adenosylcobalamin (Ado-cobalamin). Also synthesizes adenosylcobalamin 5'-phosphate from adenosylcobinamide-GDP and alpha-ribazole 5'-phosphate. This chain is Adenosylcobinamide-GDP ribazoletransferase, found in Chlorobaculum tepidum (strain ATCC 49652 / DSM 12025 / NBRC 103806 / TLS) (Chlorobium tepidum).